The primary structure comprises 583 residues: NudC domain-containing protein 1 (583 aa).

Ser-8 bears the Phosphoserine mark. In terms of domain architecture, CS spans 273-361 (IKEPLYYWQQ…NEGLTWPELV (89 aa)). At Ser-388 the chain carries Phosphoserine.

Isoform 1 is specifically expressed in leukemias and a variety of solid tumor cell lines and is also detected in testis and heart. Isoform 2 is predominantly expressed in testis and weakly expressed in tumor cells.

The protein resides in the cytoplasm. Its subcellular location is the nucleus. The protein is NudC domain-containing protein 1 of Homo sapiens (Human).